The following is a 186-amino-acid chain: Probable chorismate pyruvate-lyase (186 aa).

Substrate contacts are provided by Arg-78, Leu-116, and Glu-175.

Belongs to the UbiC family.

It is found in the cytoplasm. It catalyses the reaction chorismate = 4-hydroxybenzoate + pyruvate. It participates in cofactor biosynthesis; ubiquinone biosynthesis. In terms of biological role, removes the pyruvyl group from chorismate, with concomitant aromatization of the ring, to provide 4-hydroxybenzoate (4HB) for the ubiquinone pathway. The polypeptide is Probable chorismate pyruvate-lyase (Psychromonas ingrahamii (strain DSM 17664 / CCUG 51855 / 37)).